The primary structure comprises 85 residues: Follicular dendritic cell secreted peptide (85 aa).

The N-terminal stretch at 1–17 is a signal peptide; it reads MKKVLLLITAILAVAVG. The segment at 75-83 is O-glycosylated at one site; sequence SAPTTPLPS.

Post-translationally, O-glycosylated with core 1 or possibly core 8 glycans. Abundantly expressed in tonsil, lymph node, and trachea; strong expression in prostate; lower expression in thyroid, stomach, and colon.

It is found in the secreted. In terms of biological role, can bind to the surface of B-lymphoma cells, but not T-lymphoma cells, consistent with a function as a secreted mediator acting upon B-cells. The polypeptide is Follicular dendritic cell secreted peptide (FDCSP) (Homo sapiens (Human)).